Here is a 206-residue protein sequence, read N- to C-terminus: Histidine biosynthesis bifunctional protein HisIE (206 aa).

The interval 1-117 is phosphoribosyl-AMP cyclohydrolase; sequence MCNEPATSDV…SCFPAAPGQF (117 aa). The phosphoribosyl-ATP pyrophosphohydrolase stretch occupies residues 118–206; the sequence is LGALDALVAE…AVTVLEARHR (89 aa).

The protein in the N-terminal section; belongs to the PRA-CH family. In the C-terminal section; belongs to the PRA-PH family.

It is found in the cytoplasm. The enzyme catalyses 1-(5-phospho-beta-D-ribosyl)-ATP + H2O = 1-(5-phospho-beta-D-ribosyl)-5'-AMP + diphosphate + H(+). It carries out the reaction 1-(5-phospho-beta-D-ribosyl)-5'-AMP + H2O = 1-(5-phospho-beta-D-ribosyl)-5-[(5-phospho-beta-D-ribosylamino)methylideneamino]imidazole-4-carboxamide. It functions in the pathway amino-acid biosynthesis; L-histidine biosynthesis; L-histidine from 5-phospho-alpha-D-ribose 1-diphosphate: step 2/9. Its pathway is amino-acid biosynthesis; L-histidine biosynthesis; L-histidine from 5-phospho-alpha-D-ribose 1-diphosphate: step 3/9. The polypeptide is Histidine biosynthesis bifunctional protein HisIE (hisI) (Xylella fastidiosa (strain Temecula1 / ATCC 700964)).